We begin with the raw amino-acid sequence, 581 residues long: Putative phospholipase B-like 3 (581 aa).

An N-terminal signal peptide occupies residues 1–16 (MKLLFFLFGLIFAVEQ). Residues Asn-50, Asn-82, Asn-132, Asn-169, Asn-215, Asn-309, Asn-543, Asn-546, and Asn-560 are each glycosylated (N-linked (GlcNAc...) asparagine).

This sequence belongs to the phospholipase B-like family.

It localises to the secreted. Functionally, putative phospholipase. The chain is Putative phospholipase B-like 3 from Caenorhabditis elegans.